Reading from the N-terminus, the 94-residue chain is Nucleoid-associated protein MYPE8070 (94 aa).

This sequence belongs to the YbaB/EbfC family. As to quaternary structure, homodimer.

Its subcellular location is the cytoplasm. It is found in the nucleoid. Its function is as follows. Binds to DNA and alters its conformation. May be involved in regulation of gene expression, nucleoid organization and DNA protection. The chain is Nucleoid-associated protein MYPE8070 from Malacoplasma penetrans (strain HF-2) (Mycoplasma penetrans).